Reading from the N-terminus, the 612-residue chain is UPF0329 protein ECU05_1680/ECU11_0050 (612 aa).

The span at Arg304–Lys330 shows a compositional bias: basic and acidic residues. The segment at Arg304–Val424 is disordered. Positions Glu331–Glu349 are enriched in basic residues. Basic and acidic residues predominate over residues Glu350 to Glu388.

The protein belongs to the UPF0329 family.

The sequence is that of UPF0329 protein ECU05_1680/ECU11_0050 from Encephalitozoon cuniculi (strain GB-M1) (Microsporidian parasite).